The sequence spans 122 residues: Acidic phospholipase A2 (122 aa).

7 cysteine pairs are disulfide-bonded: Cys-26-Cys-115, Cys-28-Cys-44, Cys-43-Cys-95, Cys-49-Cys-122, Cys-50-Cys-88, Cys-57-Cys-81, and Cys-75-Cys-86. Residues Tyr-27, Gly-29, and Gly-31 each contribute to the Ca(2+) site. His-47 is an active-site residue. A Ca(2+)-binding site is contributed by Asp-48. Residue Asp-89 is part of the active site.

In terms of assembly, may form tetramers. Ca(2+) serves as cofactor. In terms of tissue distribution, expressed by the venom gland.

It is found in the secreted. The enzyme catalyses a 1,2-diacyl-sn-glycero-3-phosphocholine + H2O = a 1-acyl-sn-glycero-3-phosphocholine + a fatty acid + H(+). Functionally, PLA2 catalyzes the calcium-dependent hydrolysis of the 2-acyl groups in 3-sn-phosphoglycerides. In vivo, is non-lethal to mice when intravenously injected up to a concentration of 30 ug, however does show significant edematogenic activity at the injection site. The sequence is that of Acidic phospholipase A2 from Lachesis acrochorda (Chocoan bushmaster).